The sequence spans 316 residues: ATP synthase gamma chain (316 aa).

It belongs to the ATPase gamma chain family. In terms of assembly, F-type ATPases have 2 components, CF(1) - the catalytic core - and CF(0) - the membrane proton channel. CF(1) has five subunits: alpha(3), beta(3), gamma(1), delta(1), epsilon(1). CF(0) has three main subunits: a, b and c.

The protein localises to the cellular thylakoid membrane. In terms of biological role, produces ATP from ADP in the presence of a proton gradient across the membrane. The gamma chain is believed to be important in regulating ATPase activity and the flow of protons through the CF(0) complex. This chain is ATP synthase gamma chain, found in Synechococcus sp. (strain CC9605).